Here is an 813-residue protein sequence, read N- to C-terminus: Serine/threonine-protein kinase kin-29 (813 aa).

In terms of domain architecture, Protein kinase spans Y18–M269. ATP is bound by residues I24 to V32 and K47. D140 acts as the Proton acceptor in catalysis. Residues L383–K412 form a disordered region. The span at C388 to D400 shows a compositional bias: acidic residues.

Belongs to the protein kinase superfamily. CAMK Ser/Thr protein kinase family. SNF1 subfamily. Interacts with tax-6. It depends on Mg(2+) as a cofactor. Autophosphorylated. Elevated cAMP levels appears to act via PKA to directly or indirectly phosphorylate multiple sites on kin-29 and inhibit function.

The protein resides in the cytoplasm. Its subcellular location is the nucleus. It carries out the reaction L-seryl-[protein] + ATP = O-phospho-L-seryl-[protein] + ADP + H(+). It catalyses the reaction L-threonyl-[protein] + ATP = O-phospho-L-threonyl-[protein] + ADP + H(+). Regulates chemoreceptor expression by phosphorylating the hda-4 class II histone deacetylase (HDAC) and inhibiting the gene repression functions of hda-4 and the mef-2 transcription factor, enabling the correct sensing and transduction of food signals. Role in determining body size, the dauer decision and serotonin-mediated egg laying. May modulate the Sma/Mab pathway and regulates development in the later larval stages. This is Serine/threonine-protein kinase kin-29 from Caenorhabditis briggsae.